A 189-amino-acid polypeptide reads, in one-letter code: MADYSRYTVGVLALQGAVTEHISQIESLGAKAIAVKQVEQLNQLDALVLPGGESTAMRRLMEANGLFERLKTFDKPILGTCAGLILLADEIIGGEQVHLAKMAIKVQRNAFGRQIDSFQTPLTVSGLDKPFPAVFIRAPYITEVGENVEVLAEWQGNVVLAKQGHFFACAFHPELTNDNRIMALLLAQL.

52–54 (GES) contributes to the L-glutamine binding site. C81 acts as the Nucleophile in catalysis. L-glutamine is bound by residues R108 and 136–137 (IR). Active-site charge relay system residues include H172 and E174.

It belongs to the glutaminase PdxT/SNO family. In the presence of PdxS, forms a dodecamer of heterodimers. Only shows activity in the heterodimer.

The enzyme catalyses aldehydo-D-ribose 5-phosphate + D-glyceraldehyde 3-phosphate + L-glutamine = pyridoxal 5'-phosphate + L-glutamate + phosphate + 3 H2O + H(+). It carries out the reaction L-glutamine + H2O = L-glutamate + NH4(+). Its pathway is cofactor biosynthesis; pyridoxal 5'-phosphate biosynthesis. Catalyzes the hydrolysis of glutamine to glutamate and ammonia as part of the biosynthesis of pyridoxal 5'-phosphate. The resulting ammonia molecule is channeled to the active site of PdxS. This Haemophilus ducreyi (strain 35000HP / ATCC 700724) protein is Pyridoxal 5'-phosphate synthase subunit PdxT.